The primary structure comprises 31 residues: Cyclotide vpub-A (31 aa).

The cyclopeptide (Gly-Asn) cross-link spans 1-31 (GVIPCGESCVFIPCISAVIGCSCKSKVCYRN). 3 disulfide bridges follow: Cys-5–Cys-21, Cys-9–Cys-23, and Cys-14–Cys-28.

This sequence belongs to the cyclotide family. Bracelet subfamily. Post-translationally, this is a cyclic peptide.

Its function is as follows. Probably participates in a plant defense mechanism. The protein is Cyclotide vpub-A of Viola pubescens (Downy yellow violet).